We begin with the raw amino-acid sequence, 424 residues long: Virion nicking-joining enzyme (424 aa).

2 PLD phosphodiesterase domains span residues 110-137 (LGGVLHTKFWISDNTHIYLGSANMDWRS) and 320-346 (YSRVNHAKYMVTDKTAYIGTSNWTGNY).

Belongs to the orthopoxvirus OPG042 family.

Its subcellular location is the virion. Functionally, DNA nicking enzyme that cleaves extruded cruciform DNA at its tip. Probably nicks viral hairpins. This is Virion nicking-joining enzyme (OPG042) from Homo sapiens (Human).